Consider the following 499-residue polypeptide: MAEKYILALDQGTTSSRAIIFNQAGETVCMVNQEFPQLYPEPGWVEHDPVDIIESQISVAKKAIEIASINPDQIAAIGVTNQRETTIVWDKNTSKPVYNAIVWQCRRTASMCDQFKKLGYEDTIRKKTGLVLDAYFSATKLKWILDNVEGARQKAERGELLFGTVDSWLIWNLTGGKIHATDYSNASRTMLFNIHSLNWDEELLELFNIPEQMLPDVLPSSTVYGYTHKEIFGVEIPICGNAGDQQAALFGQICCEPGMVKNTYGTGCFILMNTGNKIVDSKHGLLTTIGWVLNDKSMCYALEGSVFSAGATVQWLRDGLKIVEKASDTEYLAKSVKDSAGVYFVPAFVGLGAPYWDMYARGTIIGITRGCTREHIVRAALESIAYQTRDVVEVMSEESGIKLHCLRVDGGASANDFLMQFQADILGVPVERPTVSETTALGAAYLAGLAVGYWKDHSEIKKQWRLDRRFEPQMDPETREELYKKWKNAVTRSLGWVEK.

Thr-13 serves as a coordination point for ADP. The ATP site is built by Thr-13, Thr-14, and Ser-15. Thr-13 contributes to the sn-glycerol 3-phosphate binding site. ADP is bound at residue Arg-17. Positions 83, 84, 135, and 244 each coordinate sn-glycerol 3-phosphate. Arg-83, Glu-84, Tyr-135, Asp-244, and Gln-245 together coordinate glycerol. The ADP site is built by Thr-266 and Gly-310. ATP-binding residues include Thr-266, Gly-310, Gln-314, and Gly-411. The ADP site is built by Gly-411 and Asn-415.

The protein belongs to the FGGY kinase family.

It catalyses the reaction glycerol + ATP = sn-glycerol 3-phosphate + ADP + H(+). It functions in the pathway polyol metabolism; glycerol degradation via glycerol kinase pathway; sn-glycerol 3-phosphate from glycerol: step 1/1. Its activity is regulated as follows. Inhibited by fructose 1,6-bisphosphate (FBP). Key enzyme in the regulation of glycerol uptake and metabolism. Catalyzes the phosphorylation of glycerol to yield sn-glycerol 3-phosphate. This is Glycerol kinase from Pseudothermotoga lettingae (strain ATCC BAA-301 / DSM 14385 / NBRC 107922 / TMO) (Thermotoga lettingae).